The sequence spans 873 residues: Rho GTPase-activating protein gacJJ (873 aa).

Residues 64–147 form a disordered region; it reads DEPSSINTSS…NVNNSSNAPT (84 aa). Low complexity predominate over residues 66–91; it reads PSSINTSSGNIGSNNNSSSNTPLTGS. Residues 103–112 show a composition bias toward gly residues; the sequence is IGGGGGGGDN. Residues 113 to 144 show a composition bias toward low complexity; sequence GITNSGNIGSSSNSDLKKSTSSGIVNVNNSSN. One can recognise a PH domain in the interval 301–402; that stretch reads NPVREGYLKK…WTVLPIVIES (102 aa). Residues 428–621 form the Rho-GAP domain; sequence VPIEKTVSGN…SLIRDYQYIF (194 aa). Residues 628 to 694 form the SH3 domain; it reads EQKILAKSLY…PASYVELLPH (67 aa). Residues 715–761 are a coiled coil; the sequence is MLEMESTKTKNQEIDKNIKQLEITKKELESTINDLENEKAALENDPT.

It localises to the cytoplasm. In terms of biological role, rho GTPase-activating protein involved in the signal transduction pathway. This Dictyostelium discoideum (Social amoeba) protein is Rho GTPase-activating protein gacJJ (gacJJ).